A 415-amino-acid polypeptide reads, in one-letter code: von Willebrand factor A domain-containing protein 1 (415 aa).

An N-terminal signal peptide occupies residues 1 to 18 (MLFWTVLSMALSLRLALA). Positions 34 to 213 (DLLFLLDSSA…ELRGAIIDAM (180 aa)) constitute a VWFA domain. Phosphoserine occurs at positions 74, 80, and 93. Fibronectin type-III domains follow at residues 214-305 (QPHQ…LQEE) and 307-405 (GPER…VPQA). N-linked (GlcNAc...) asparagine glycosylation occurs at N264. Residues C369 and C393 are joined by a disulfide bond.

As to quaternary structure, homodimer or homomultimer; disulfide-linked. Interacts with HSPG2. Post-translationally, N-glycosylated.

Its subcellular location is the secreted. The protein localises to the extracellular space. It is found in the extracellular matrix. It localises to the basement membrane. Its function is as follows. Promotes matrix assembly. Involved in the organization of skeletal muscles and in the formation of neuromuscular junctions. The polypeptide is von Willebrand factor A domain-containing protein 1 (Vwa1) (Rattus norvegicus (Rat)).